Reading from the N-terminus, the 214-residue chain is MGRRPARCYRYCKNKPYPKSRFCRGVPDAKIRIFDLGRKKAKVDEFPLCGHMVSDEYEQLSSEALEAARICANKYMVKSCGKDGFHIRVRLHPFHVIRINKMLSCAGADRLQTGMRGAFGKPQGTVARVHIGQVIMSIRTKLQNKEHVIEALRRAKFKFPGRQKIHISKKWGFTKFNADEFEDMVAEKRLIPDGCGVKYIPNRGPLDKWRALHS.

Arg32 carries the post-translational modification Citrulline. Lys175 participates in a covalent cross-link: Glycyl lysine isopeptide (Lys-Gly) (interchain with G-Cter in SUMO2). Residue Lys188 forms a Glycyl lysine isopeptide (Lys-Gly) (interchain with G-Cter in ubiquitin) linkage.

The protein belongs to the universal ribosomal protein uL16 family. As to quaternary structure, component of the large ribosomal subunit. Mature ribosomes consist of a small (40S) and a large (60S) subunit. The 40S subunit contains about 33 different proteins and 1 molecule of RNA (18S). The 60S subunit contains about 49 different proteins and 3 molecules of RNA (28S, 5.8S and 5S). Citrullinated by PADI4. In terms of processing, ufmylated by UFL1.

The protein localises to the cytoplasm. In terms of biological role, component of the large ribosomal subunit. Plays a role in the formation of actively translating ribosomes. May play a role in the embryonic brain development. This is Large ribosomal subunit protein uL16 from Rattus norvegicus (Rat).